The chain runs to 238 residues: Aliphatic sulfonates import ATP-binding protein SsuB (238 aa).

The ABC transporter domain occupies 7–221 (VSLHQVHQQF…RPGDAAFASL (215 aa)). 39–46 (GRSGSGKT) is a binding site for ATP.

The protein belongs to the ABC transporter superfamily. Aliphatic sulfonates importer (TC 3.A.1.17.2) family. As to quaternary structure, the complex is composed of two ATP-binding proteins (SsuB), two transmembrane proteins (SsuC) and a solute-binding protein (SsuA).

The protein localises to the cell inner membrane. The catalysed reaction is ATP + H2O + aliphatic sulfonate-[sulfonate-binding protein]Side 1 = ADP + phosphate + aliphatic sulfonateSide 2 + [sulfonate-binding protein]Side 1.. Its function is as follows. Part of the ABC transporter complex SsuABC involved in aliphatic sulfonates import. Responsible for energy coupling to the transport system. This Granulibacter bethesdensis (strain ATCC BAA-1260 / CGDNIH1) protein is Aliphatic sulfonates import ATP-binding protein SsuB.